Consider the following 124-residue polypeptide: Ribonuclease pancreatic (124 aa).

Positions 1 to 13 (KETAAAKFERQHI) are enriched in basic and acidic residues. Positions 1-24 (KETAAAKFERQHIDSNPSSVSSSN) are disordered. Substrate is bound by residues K7 and R10. H12 serves as the catalytic Proton acceptor. Residues 15–24 (SNPSSVSSSN) show a composition bias toward low complexity. 4 disulfide bridges follow: C26/C84, C40/C95, C58/C110, and C65/C72. N34 carries an N-linked (GlcNAc...) asparagine; partial glycan. Substrate is bound by residues 41 to 45 (KPVNT), K66, and R85. H119 acts as the Proton donor in catalysis.

It belongs to the pancreatic ribonuclease family. Monomer. Interacts with and forms tight 1:1 complexes with RNH1. Dimerization of two such complexes may occur. Interaction with RNH1 inhibits this protein. Pancreas.

It localises to the secreted. The enzyme catalyses an [RNA] containing cytidine + H2O = an [RNA]-3'-cytidine-3'-phosphate + a 5'-hydroxy-ribonucleotide-3'-[RNA].. It carries out the reaction an [RNA] containing uridine + H2O = an [RNA]-3'-uridine-3'-phosphate + a 5'-hydroxy-ribonucleotide-3'-[RNA].. Functionally, endonuclease that catalyzes the cleavage of RNA on the 3' side of pyrimidine nucleotides. Acts on single-stranded and double-stranded RNA. In Antilocapra americana (Pronghorn), this protein is Ribonuclease pancreatic (RNASE1).